Here is a 426-residue protein sequence, read N- to C-terminus: Histidine--tRNA ligase (426 aa).

The protein belongs to the class-II aminoacyl-tRNA synthetase family. In terms of assembly, homodimer.

It localises to the cytoplasm. It carries out the reaction tRNA(His) + L-histidine + ATP = L-histidyl-tRNA(His) + AMP + diphosphate + H(+). The polypeptide is Histidine--tRNA ligase (Streptococcus sanguinis (strain SK36)).